A 365-amino-acid chain; its full sequence is Probable tRNA pseudouridine synthase B (365 aa).

The active-site Nucleophile is Asp-43. In terms of domain architecture, PUA spans 209-285 (YPKIVVKRSA…DHIFLEADDG (77 aa)). The disordered stretch occupies residues 300–365 (SGSGLHKDIQ…GKERHGRDHQ (66 aa)). Composition is skewed to basic and acidic residues over residues 304-318 (LHKD…KDTR), 326-336 (TGPEKTADRVW), and 354-365 (GGGKERHGRDHQ).

The protein belongs to the pseudouridine synthase TruB family. Type 2 subfamily.

It carries out the reaction uridine(55) in tRNA = pseudouridine(55) in tRNA. Could be responsible for synthesis of pseudouridine from uracil-55 in the psi GC loop of transfer RNAs. This is Probable tRNA pseudouridine synthase B from Thermoplasma acidophilum (strain ATCC 25905 / DSM 1728 / JCM 9062 / NBRC 15155 / AMRC-C165).